A 509-amino-acid chain; its full sequence is tRNA-2-methylthio-N(6)-dimethylallyladenosine synthase (509 aa).

Positions 1-15 (MNEQQRLASQQVNSS) are enriched in polar residues. The interval 1–23 (MNEQQRLASQQVNSSTKKEEKDY) is disordered. One can recognise an MTTase N-terminal domain in the interval 66-184 (RKFYIRTYGC…LPYILKDAMF (119 aa)). The [4Fe-4S] cluster site is built by cysteine 75, cysteine 111, cysteine 145, cysteine 221, cysteine 225, and cysteine 228. The region spanning 207–437 (RRGDIKAWVN…NALVNKLAIE (231 aa)) is the Radical SAM core domain. Residues 440–503 (DRYKGQIVEV…TWSLNGELVE (64 aa)) enclose the TRAM domain.

The protein belongs to the methylthiotransferase family. MiaB subfamily. In terms of assembly, monomer. Requires [4Fe-4S] cluster as cofactor.

The protein localises to the cytoplasm. It carries out the reaction N(6)-dimethylallyladenosine(37) in tRNA + (sulfur carrier)-SH + AH2 + 2 S-adenosyl-L-methionine = 2-methylsulfanyl-N(6)-dimethylallyladenosine(37) in tRNA + (sulfur carrier)-H + 5'-deoxyadenosine + L-methionine + A + S-adenosyl-L-homocysteine + 2 H(+). Catalyzes the methylthiolation of N6-(dimethylallyl)adenosine (i(6)A), leading to the formation of 2-methylthio-N6-(dimethylallyl)adenosine (ms(2)i(6)A) at position 37 in tRNAs that read codons beginning with uridine. The polypeptide is tRNA-2-methylthio-N(6)-dimethylallyladenosine synthase (Bacillus anthracis).